A 1032-amino-acid chain; its full sequence is Serine/threonine-protein kinase ppk31 (1032 aa).

One can recognise a PAS domain in the interval 3 to 72; that stretch reads NPEQLKRILS…KATDNLFRKS (70 aa). Residues 528-877 form the Protein kinase domain; sequence FILLKEINRG…YQEIKKHPFF (350 aa). Residues 534–542 and K557 each bind ATP; that span reads INRGAYGRV. D652 acts as the Proton acceptor in catalysis. The disordered stretch occupies residues 938–963; sequence PKATPADSGTETSNSAAFSASEEETT. A compositionally biased stretch (low complexity) spans 947-957; sequence TETSNSAAFSA.

This sequence belongs to the protein kinase superfamily. Ser/Thr protein kinase family.

The protein localises to the cytoplasm. It carries out the reaction L-seryl-[protein] + ATP = O-phospho-L-seryl-[protein] + ADP + H(+). The catalysed reaction is L-threonyl-[protein] + ATP = O-phospho-L-threonyl-[protein] + ADP + H(+). Functionally, has a role in meiosis. The protein is Serine/threonine-protein kinase ppk31 (ppk31) of Schizosaccharomyces pombe (strain 972 / ATCC 24843) (Fission yeast).